Here is a 267-residue protein sequence, read N- to C-terminus: Corrinoid adenosyltransferase EutT (267 aa).

A divalent metal cation contacts are provided by C80 and C83.

The protein belongs to the Cob(I)alamin adenosyltransferase family. EutT subfamily. In terms of assembly, homodimer. The cofactor is a divalent metal cation.

The protein resides in the bacterial microcompartment. The enzyme catalyses 2 cob(II)alamin + reduced [electron-transfer flavoprotein] + 2 ATP + 2 H2O = 2 adenosylcob(III)alamin + oxidized [electron-transfer flavoprotein] + 2 phosphate + 2 diphosphate + 3 H(+). The catalysed reaction is 2 cob(II)inamide + reduced [electron-transfer flavoprotein] + 2 ATP + 2 H2O = 2 adenosylcob(III)inamide + oxidized [electron-transfer flavoprotein] + 2 phosphate + 2 diphosphate + 3 H(+). It participates in amine and polyamine degradation; ethanolamine degradation. Converts cyanocobalamin (CN-B12) to adenosylcobalamin (AdoCbl), the inducer of the eut operon. Is not active on cobinamide nor other intermediates in the adenosylcobalamin synthetic pathway. Allows full induction of the eut operon. The chain is Corrinoid adenosyltransferase EutT (eutT) from Escherichia coli O6:H1 (strain CFT073 / ATCC 700928 / UPEC).